The chain runs to 480 residues: 2-phosphoxylose phosphatase 1 (480 aa).

Over 1-6 (MLFRNR) the chain is Cytoplasmic. A helical; Signal-anchor for type II membrane protein transmembrane segment spans residues 7–27 (FLLLLALAALLAFVSLSLQFF). Residues 28-480 (HLIPVSTPKN…YYDACHREGF (453 aa)) are Lumenal-facing. His97 serves as the catalytic Nucleophile. Residues Asn305 and Asn354 are each glycosylated (N-linked (GlcNAc...) asparagine). Catalysis depends on Asp379, which acts as the Proton donor.

The protein belongs to the histidine acid phosphatase family. As to quaternary structure, interacts with B3GAT3; the interaction increases the 2-phosphoxylose phosphatase activity of PXYLP1 during completion of linkage region formation in a B3GAT3-mediated manner. As to expression, widely expressed. Strongly expressed in spleen, fetal liver, moderately in placenta, pancreas, kidney, thymus and colon.

It localises to the golgi apparatus membrane. It carries out the reaction 3-O-[beta-D-GlcA-(1-&gt;3)-beta-D-Gal-(1-&gt;3)-beta-D-Gal-(1-&gt;4)-beta-D-2-O-P-Xyl]-L-seryl-[protein] + H2O = 3-O-(beta-D-GlcA-(1-&gt;3)-beta-D-Gal-(1-&gt;3)-beta-D-Gal-(1-&gt;4)-beta-D-Xyl)-L-seryl-[protein] + phosphate. Its function is as follows. Responsible for the 2-O-dephosphorylation of xylose in the glycosaminoglycan-protein linkage region of proteoglycans thereby regulating the amount of mature glycosaminoglycan (GAG) chains. Sulfated glycosaminoglycans (GAGs), including heparan sulfate and chondroitin sulfate, are synthesized on the so-called common GAG-protein linkage region (GlcUAbeta1-3Galbeta1-3Galbeta1-4Xylbeta1-O-Ser) of core proteins, which is formed by the stepwise addition of monosaccharide residues by the respective specific glycosyltransferases. Xylose 2-O-dephosphorylation during completion of linkage region formation is a prerequisite for the initiation and efficient elongation of the repeating disaccharide region of GAG chains. The protein is 2-phosphoxylose phosphatase 1 of Homo sapiens (Human).